The primary structure comprises 222 residues: uncharacterized protein (222 aa).

Positions 43-73 (SQNEEFEYEMERMLSILNEQTMDLTQLQSRI) form a coiled coil.

This is an uncharacterized protein from Rickettsia conorii (strain ATCC VR-613 / Malish 7).